The sequence spans 453 residues: MAPQLLLCLILTFLWSLPEAESNVFLKSKVANRFLQRTKRSNSLFEEIRPGNIERECIEEKCSKEEAREVFEDNEKTETFWNVYVDGDQCSSNPCHYRGTCKDGIGSYTCTCLPNYEGKNCEKVLFKSCRAFNGNCWHFCKRVQSETQCSCAESYLLGVDGHSCVAEGDFSCGRNIKARNKREASLPDFVQSQKATVLKKSDNPSPDIRIVNGMDCKLGECPWQAVLINEKGEVFCGGTILSPIHVLTAAHCINQTKSVSVIVGEIDISRKETRRLLSVDKIYVHKKFVPPNSYYQNIDRFAYDYDIAIIRMKTPIQFSENVVPACLPTADFAKEVLMKQDSGIVSGFGRTQSIGYTSNILKVITVPYVDRHTCMLSSNFRITQNMFCAGYDTLPQDACQGDSGGPHITAYGDTHFVTGIISWGEGCARKGKYGVYTKVSNFIPWIKKIMSLK.

Positions 1–20 (MAPQLLLCLILTFLWSLPEA) are cleaved as a signal peptide. Positions 21–40 (ESNVFLKSKVANRFLQRTKR) are excised as a propeptide. Positions 41-86 (SNSLFEEIRPGNIERECIEEKCSKEEAREVFEDNEKTETFWNVYVD) constitute a Gla domain. 4-carboxyglutamate is present on residues Glu46, Glu47, Glu54, Glu56, Glu59, Glu60, Glu65, Glu66, Glu69, Glu72, and Glu75. A disulfide bridge links Cys57 with Cys62. The 37-residue stretch at 86 to 122 (DGDQCSSNPCHYRGTCKDGIGSYTCTCLPNYEGKNCE) folds into the EGF-like 1; calcium-binding domain. Disulfide bonds link Cys90/Cys101, Cys95/Cys110, Cys112/Cys121, Cys129/Cys140, Cys136/Cys149, Cys151/Cys164, Cys172/Cys326, Cys216/Cys221, Cys236/Cys252, Cys374/Cys388, and Cys399/Cys427. O-linked (Hex...) serine glycosylation is present at Ser92. Residues 129 to 164 (CRAFNGNCWHFCKRVQSETQCSCAESYLLGVDGHSC) enclose the EGF-like 2 domain. Residues 182-209 (REASLPDFVQSQKATVLKKSDNPSPDIR) constitute a propeptide, activation peptide. A Peptidase S1 domain is found at 210–451 (IVNGMDCKLG…FIPWIKKIMS (242 aa)). The active-site Charge relay system is the His251. Asn254 is a glycosylation site (N-linked (GlcNAc...) asparagine). Asp306 functions as the Charge relay system in the catalytic mechanism. Ser403 (charge relay system) is an active-site residue.

Belongs to the peptidase S1 family. Snake venom subfamily. In terms of assembly, heterodimer of a light chain and a heavy chain; disulfide-linked. In terms of processing, gamma-carboxyglutamate residues are formed by vitamin K dependent carboxylation. These residues are essential for the binding of calcium. In terms of tissue distribution, expressed by the venom gland.

It localises to the secreted. It catalyses the reaction Selective cleavage of Arg-|-Thr and then Arg-|-Ile bonds in prothrombin to form thrombin.. Its function is as follows. Snake prothrombin activator that attacks the hemostatic system of prey. This protein is functionally similar to blood coagulation factor Xa. This is Venom prothrombin activator notecarin-D2 from Notechis scutatus scutatus (Mainland tiger snake).